Consider the following 743-residue polypeptide: Myb-related protein B (743 aa).

The segment at 1-29 is disordered; it reads MSRRSRGDDLEDLQYQDTDSDVPEPKENR. The segment covering 9–22 has biased composition (acidic residues); sequence DLEDLQYQDTDSDV. 3 consecutive HTH myb-type domains span residues 26 to 77, 78 to 133, and 134 to 184; these read KENR…LRVL, HPDL…NPEV, and KKSS…KRKV. DNA-binding regions (H-T-H motif) lie at residues 54-77, 106-129, and 157-180; these read WKTI…LRVL, WTLI…HNHL, and WAEI…NSTI. Disordered stretches follow at residues 221–262 and 381–406; these read VERS…SESA and VTEN…TPVK.

In terms of assembly, component of the DREAM complex.

It localises to the nucleus. The sequence is that of Myb-related protein B (mybl2) from Xenopus laevis (African clawed frog).